Reading from the N-terminus, the 436-residue chain is ATP-dependent protease ATPase subunit HslU (436 aa).

ATP contacts are provided by residues I19, 61–65 (GVGKT), D249, E314, and R386.

The protein belongs to the ClpX chaperone family. HslU subfamily. A double ring-shaped homohexamer of HslV is capped on each side by a ring-shaped HslU homohexamer. The assembly of the HslU/HslV complex is dependent on binding of ATP.

Its subcellular location is the cytoplasm. In terms of biological role, ATPase subunit of a proteasome-like degradation complex; this subunit has chaperone activity. The binding of ATP and its subsequent hydrolysis by HslU are essential for unfolding of protein substrates subsequently hydrolyzed by HslV. HslU recognizes the N-terminal part of its protein substrates and unfolds these before they are guided to HslV for hydrolysis. The sequence is that of ATP-dependent protease ATPase subunit HslU from Bartonella tribocorum (strain CIP 105476 / IBS 506).